The chain runs to 86 residues: Putative defensin-like protein 189 (86 aa).

The first 28 residues, 1-28 (MKMAKSANEIGFITCLVVFLVLTGQSNG), serve as a signal peptide directing secretion. Cystine bridges form between cysteine 39/cysteine 85, cysteine 52/cysteine 71, cysteine 57/cysteine 80, and cysteine 61/cysteine 82.

Belongs to the DEFL family.

It localises to the secreted. The polypeptide is Putative defensin-like protein 189 (Arabidopsis thaliana (Mouse-ear cress)).